A 1197-amino-acid chain; its full sequence is Envelopment polyprotein (1197 aa).

The N-terminal stretch at 1-16 (MYVLLTILTSVLVCEA) is a signal peptide. At 17–130 (IIRVSLSSTR…RDAKQIGRKT (114 aa)) the chain is on the cytoplasmic side. The segment at 131-153 (MAGIAMTVLPALAVFALAPVVFA) is internal signal sequence for glycoprotein N. At 154 to 582 (EDPHLRNRPG…GLINYQCHTA (429 aa)) the chain is on the lumenal side. 12 cysteine pairs are disulfide-bonded: C179/C188, C229/C239, C250/C281, C271/C284, C304/C456, C322/C332, C374/C434, C402/C413, C420/C425, C479/C482, C486/C556, and C506/C511. Residues 583-603 (LSAFVVVFVFSSIAIICLAIL) traverse the membrane as a helical segment. Residues 604–673 (YRVLKCLKIA…APIPRHAPIP (70 aa)) lie on the Cytoplasmic side of the membrane. Residues 608–650 (KCLKIAPRKVLNPLMWITAFIRWIYKKMVARVADNINQVNREI) form a golgi retention signal region. The important for correct targeting of the glycoproteins to the Golgi complex but not for heterodimerization stretch occupies residues 646-650 (VNREI). Residues 675–690 (YSTYLMLLLIVSYASA) are internal signal sequence for glycoprotein C. Disulfide bonds link C691–C731, C704–C713, C756–C852, C771–C965, C777–C825, C783–C832, C788–C814, C818–C823, C934–C947, C1029–C1101, C1039–C1042, and C1049–C1083. The Lumenal segment spans residues 691 to 1159 (CSELIQASSR…MSWFGGPLKT (469 aa)). The fusion loop stretch occupies residues 777–783 (CHLVGEC). N-linked (GlcNAc...) asparagine; by host glycosylation occurs at N794. The fusion loop stretch occupies residues 819–830 (GGWGCGCFNVNP). N-linked (GlcNAc...) asparagine; by host glycosylation occurs at N1035. N1077 is a glycosylation site (N-linked (GlcNAc...) asparagine; by host). Residues 1160–1180 (ILLICLYVALSIGLFFLLIYL) traverse the membrane as a helical segment. At 1181–1197 (GGTGLSKMWLAATKKAS) the chain is on the cytoplasmic side.

The protein belongs to the phlebovirus envelope glycoprotein family. Heterodimer with glycoprotein C. Homotrimer (postfusion). Interacts with nucleocapsid protein N and with the polymerase L in order to package them into virus particles. Interacts with host E3 ubiquitin-protein ligase UBR4; this interaction is important for viral RNA production. Interacts with host LRP1; this interaction facilitates virus entry into the host cell. In terms of assembly, heterodimer with glycoprotein C. In terms of processing, specific enzymatic cleavages in vivo yield mature proteins including NSm protein, Glycoprotein C, and Glycoprotein N. Glycosylated. The glycans can attach to host CD209/DC-SIGN, and may play a role in virus entry into dendritic cells. Post-translationally, palmitoylated.

It is found in the virion membrane. Its subcellular location is the host Golgi apparatus membrane. The protein localises to the host endoplasmic reticulum membrane. It localises to the host mitochondrion outer membrane. The protein resides in the host Golgi apparatus. It is found in the virion. Its function is as follows. Structural component of the virion that interacts with glycoprotein C. It shields the hydrophobic fusion loops of the glycoprotein C, preventing premature fusion. The glycoprotein protrusions are arranged on an icosahedral lattice, with T=12 triangulation. They are able to attach the virion to the host cell receptor CD209/DC-SIGN and to promote fusion of membranes with the late endosome after endocytosis of the virion. Plays a role in the packaging of ribonucleoproteins and polymerase during virus assembly. In terms of biological role, structural component of the virion that interacts with glycoprotein N. Acts as a class II fusion protein that is activated upon acidification and subsequent repositioning of the glycoprotein N. The glycoprotein protrusions are arranged on an icosahedral lattice, with T=12 triangulation. They are able to attach the virion to the host cell receptor CD209/DC-SIGN and to promote fusion of membranes with the late endosome after endocytosis of the virion. Plays a role in the inhibition of virus-induced apoptosis. Plays a role for virus dissemination in vertebrates. Functionally, plays a role for virus dissemination in mosquitoes. May act as a structural virion protein in insects. This Rift valley fever virus (strain ZH-548 M12) (RVFV) protein is Envelopment polyprotein (GP).